Consider the following 1006-residue polypeptide: UPF0182 protein Arth_2749 (1006 aa).

7 helical membrane-spanning segments follow: residues 18–38, 64–84, 115–135, 168–188, 211–231, 260–280, and 287–307; these read GALT…IFFA, IIIF…AIRI, VVMI…AASQ, FLGF…IAGI, QIHL…NFWL, SILA…AVIG, and IGTA…PWVI. 3 disordered regions span residues 490–519, 896–923, and 975–1006; these read GAPE…FTGN, KAGD…GGTD, and LGSE…SPSN. The segment covering 495 to 509 has biased composition (basic and acidic residues); it reads SPHREQDRPAGKEGD. 2 stretches are compositionally biased toward low complexity: residues 911–923 and 979–1000; these read AGGS…GGTD and GASP…AATP.

The protein belongs to the UPF0182 family.

The protein resides in the cell membrane. The polypeptide is UPF0182 protein Arth_2749 (Arthrobacter sp. (strain FB24)).